Here is a 403-residue protein sequence, read N- to C-terminus: Probable N-acetyltransferase HLS1 (403 aa).

Residues 2-177 enclose the N-acetyltransferase domain; the sequence is TVVREYDPTR…VNPVYAHRVN (176 aa).

The protein belongs to the acetyltransferase family.

Its function is as follows. Ethylene-responsive N-acetyltransferase required for differential cell elongation in the hypocotyl. Regulates apical hook formation of dark-grown seedlings. May control differential cell growth by regulating auxin activity. May be involved in negative feedback regulation of auxin homeostasis through the control of GH3-like genes. Modulates de novo shoot organogenesis. This is Probable N-acetyltransferase HLS1 (HLS1) from Arabidopsis thaliana (Mouse-ear cress).